Here is a 643-residue protein sequence, read N- to C-terminus: Threonine--tRNA ligase (643 aa).

One can recognise a TGS domain in the interval 1 to 61 (MIKVTLKDGS…KEDVSLSICT (61 aa)). The catalytic stretch occupies residues 240 to 540 (DHNKLGRELK…LIEKYAGAFP (301 aa)). Zn(2+) contacts are provided by Cys-335, His-386, and His-517.

The protein belongs to the class-II aminoacyl-tRNA synthetase family. Homodimer. The cofactor is Zn(2+).

It is found in the cytoplasm. The enzyme catalyses tRNA(Thr) + L-threonine + ATP = L-threonyl-tRNA(Thr) + AMP + diphosphate + H(+). Its function is as follows. Catalyzes the attachment of threonine to tRNA(Thr) in a two-step reaction: L-threonine is first activated by ATP to form Thr-AMP and then transferred to the acceptor end of tRNA(Thr). Also edits incorrectly charged L-seryl-tRNA(Thr). The chain is Threonine--tRNA ligase from Clostridium botulinum (strain Eklund 17B / Type B).